Here is a 384-residue protein sequence, read N- to C-terminus: 4-hydroxy-3-methylbut-2-en-1-yl diphosphate synthase (flavodoxin) (384 aa).

The [4Fe-4S] cluster site is built by Cys-272, Cys-275, Cys-307, and Glu-314.

Belongs to the IspG family. [4Fe-4S] cluster is required as a cofactor.

The catalysed reaction is (2E)-4-hydroxy-3-methylbut-2-enyl diphosphate + oxidized [flavodoxin] + H2O + 2 H(+) = 2-C-methyl-D-erythritol 2,4-cyclic diphosphate + reduced [flavodoxin]. It functions in the pathway isoprenoid biosynthesis; isopentenyl diphosphate biosynthesis via DXP pathway; isopentenyl diphosphate from 1-deoxy-D-xylulose 5-phosphate: step 5/6. Its function is as follows. Converts 2C-methyl-D-erythritol 2,4-cyclodiphosphate (ME-2,4cPP) into 1-hydroxy-2-methyl-2-(E)-butenyl 4-diphosphate. The polypeptide is 4-hydroxy-3-methylbut-2-en-1-yl diphosphate synthase (flavodoxin) (Rhodospirillum rubrum (strain ATCC 11170 / ATH 1.1.1 / DSM 467 / LMG 4362 / NCIMB 8255 / S1)).